The chain runs to 83 residues: Small ribosomal subunit protein uS17 (83 aa).

Belongs to the universal ribosomal protein uS17 family. In terms of assembly, part of the 30S ribosomal subunit.

In terms of biological role, one of the primary rRNA binding proteins, it binds specifically to the 5'-end of 16S ribosomal RNA. The chain is Small ribosomal subunit protein uS17 from Colwellia psychrerythraea (strain 34H / ATCC BAA-681) (Vibrio psychroerythus).